A 227-amino-acid polypeptide reads, in one-letter code: Rho-related GTP-binding protein RhoN (227 aa).

GTP is bound at residue 14–21 (GDAECGKT). Residues 36 to 44 (YVPTVFENY) carry the Effector region motif. Residues 61 to 65 (DTSGS) and 119 to 122 (CKLD) contribute to the GTP site. The disordered stretch occupies residues 186–227 (HRQLRRTDSRRGLQRSTQLSGRPDRGNEGEMHKDRAKSCNLM). A compositionally biased stretch (basic and acidic residues) spans 207–227 (RPDRGNEGEMHKDRAKSCNLM). A Cysteine methyl ester modification is found at Cys224. Cys224 is lipidated: S-geranylgeranyl cysteine. Residues 225–227 (NLM) constitute a propeptide, removed in mature form.

This sequence belongs to the small GTPase superfamily. Rho family. In terms of assembly, interacts with the Rho-GAP domain of RACGAP1. Interacts with UBXD5. Interacts with PRAG1. As to expression, expressed specifically in neurons in the brain and spinal cord and also in hepatic stellate cells.

The protein resides in the cytoplasmic vesicle. It localises to the secretory vesicle. The protein localises to the acrosome membrane. Functionally, may be specifically involved in neuronal and hepatic functions. Is a C3 toxin-insensitive member of the Rho subfamily. The sequence is that of Rho-related GTP-binding protein RhoN (Rnd2) from Mus musculus (Mouse).